The following is a 544-amino-acid chain: Chaperonin GroEL (544 aa).

Residues 30–33, lysine 51, 87–91, glycine 415, 481–483, and aspartate 497 each bind ATP; these read TLGP, DGTTT, and DAL.

It belongs to the chaperonin (HSP60) family. In terms of assembly, forms a cylinder of 14 subunits composed of two heptameric rings stacked back-to-back. Interacts with the co-chaperonin GroES.

Its subcellular location is the cytoplasm. It carries out the reaction ATP + H2O + a folded polypeptide = ADP + phosphate + an unfolded polypeptide.. In terms of biological role, together with its co-chaperonin GroES, plays an essential role in assisting protein folding. The GroEL-GroES system forms a nano-cage that allows encapsulation of the non-native substrate proteins and provides a physical environment optimized to promote and accelerate protein folding. The polypeptide is Chaperonin GroEL (Chlamydia felis (strain Fe/C-56) (Chlamydophila felis)).